The primary structure comprises 284 residues: ATP synthase subunit beta, chloroplastic (284 aa).

It belongs to the ATPase alpha/beta chains family. In terms of assembly, F-type ATPases have 2 components, CF(1) - the catalytic core - and CF(0) - the membrane proton channel. CF(1) has five subunits: alpha(3), beta(3), gamma(1), delta(1), epsilon(1). CF(0) has four main subunits: a(1), b(1), b'(1) and c(9-12).

The protein resides in the plastid. It localises to the chloroplast thylakoid membrane. The catalysed reaction is ATP + H2O + 4 H(+)(in) = ADP + phosphate + 5 H(+)(out). In terms of biological role, produces ATP from ADP in the presence of a proton gradient across the membrane. The catalytic sites are hosted primarily by the beta subunits. The protein is ATP synthase subunit beta, chloroplastic (atpB) of Asplenium nidus (Bird's nest fern).